A 283-amino-acid chain; its full sequence is Syntaxin VAM3 (283 aa).

The disordered stretch occupies residues 1 to 26 (MSFFDIEAQSSKGNSQQEPQFSTNQK). At 1–261 (MSFFDIEAQS…ADQHQRDRNK (261 aa)) the chain is on the cytoplasmic side. Residues 8–25 (AQSSKGNSQQEPQFSTNQ) are compositionally biased toward polar residues. Coiled-coil stretches lie at residues 28-48 (KELS…EKEC) and 84-111 (LIHQ…SYNQ). Disordered regions lie at residues 116-146 (FPLK…DPES) and 162-182 (NEGQ…QGLS). Over residues 127-144 (SKERKDIHPRTEAVRQDP) the composition is skewed to basic and acidic residues. Residues 169–189 (QLQEEQEQQQQGLSQEELDFQ) are a coiled coil. In terms of domain architecture, t-SNARE coiled-coil homology spans 190 to 252 (TIIHQERSQQ…QNANKQLTRA (63 aa)). Residues 262 to 282 (CGKVTLIIIIVVCMVVLLAVL) traverse the membrane as a helical; Anchor for type IV membrane protein segment. A topological domain (vacuolar) is located at residue Ser283.

This sequence belongs to the syntaxin family. In terms of assembly, associates with VAM7.

It is found in the vacuole membrane. Required for vacuolar assembly. Provides the t-SNARE function in a late step of the vacuolar assembly. Required for homotypic vacuole membrane fusion, autophagy and fusion of biosynthetic transport vesicles with the vacuole. Required for the delivery of alpha-factor receptor-ligand complexes to the vacuole. The polypeptide is Syntaxin VAM3 (VAM3) (Saccharomyces cerevisiae (strain ATCC 204508 / S288c) (Baker's yeast)).